We begin with the raw amino-acid sequence, 211 residues long: Pyrrolidone-carboxylate peptidase 1 (211 aa).

Catalysis depends on residues Glu-79, Cys-142, and His-164.

This sequence belongs to the peptidase C15 family. Homotetramer.

Its subcellular location is the cytoplasm. It catalyses the reaction Release of an N-terminal pyroglutamyl group from a polypeptide, the second amino acid generally not being Pro.. Its function is as follows. Removes 5-oxoproline from various penultimate amino acid residues except L-proline. The polypeptide is Pyrrolidone-carboxylate peptidase 1 (pcp1) (Saccharolobus solfataricus (strain ATCC 35092 / DSM 1617 / JCM 11322 / P2) (Sulfolobus solfataricus)).